Reading from the N-terminus, the 450-residue chain is Na(+)/H(+) antiporter NhaA (450 aa).

The next 11 helical transmembrane spans lie at 24-44 (FFAI…LALV), 75-95 (LILW…GLEI), 111-131 (ALPI…YLAL), 140-160 (GWGV…SLLG), 169-189 (VFLT…IAFF), 196-216 (FSFL…NWLG), 224-244 (LLVG…ATIA), 318-338 (WVAW…TVSA), 352-372 (IFFG…WLLV), 390-410 (GIGW…TLAF), and 422-442 (SILC…RVLL).

This sequence belongs to the NhaA Na(+)/H(+) (TC 2.A.33) antiporter family.

It localises to the cell inner membrane. The catalysed reaction is Na(+)(in) + 2 H(+)(out) = Na(+)(out) + 2 H(+)(in). Its function is as follows. Na(+)/H(+) antiporter that extrudes sodium in exchange for external protons. The sequence is that of Na(+)/H(+) antiporter NhaA from Oleidesulfovibrio alaskensis (strain ATCC BAA-1058 / DSM 17464 / G20) (Desulfovibrio alaskensis).